Reading from the N-terminus, the 1069-residue chain is Thyrotropin-releasing hormone-degrading ectoenzyme (1069 aa).

Residues 1–11 (MALDGELGEQE) show a composition bias toward acidic residues. Positions 1–46 (MALDGELGEQEEEKKKKKKKKRKKKKEEEEEEEGAEKSSSPFAAAM) are disordered. Over 1-85 (MALDGELGEQ…ERHIAVHKRL (85 aa)) the chain is Cytoplasmic. The span at 15–25 (KKKKKKKRKKK) shows a compositional bias: basic residues. A helical; Signal-anchor for type II membrane protein transmembrane segment spans residues 86-106 (VLAFAVSLVALLAVTMLAVLL). At 107–1069 (SLRFDECGAS…FQWLGKALRH (963 aa)) the chain is on the extracellular side. The disordered stretch occupies residues 117–179 (ATPGADGGPS…PSEEEREPWE (63 aa)). Over residues 121–136 (ADGGPSGFPERGGNGS) the composition is skewed to gly residues. Residues Asn-134, Asn-205, Asn-220, Asn-267, and Asn-383 are each glycosylated (N-linked (GlcNAc...) asparagine). Position 449–453 (449–453 (AAMEN)) interacts with substrate. His-485 contributes to the Zn(2+) binding site. Glu-486 functions as the Proton acceptor in the catalytic mechanism. Zn(2+) contacts are provided by His-489 and Glu-508. 7 N-linked (GlcNAc...) asparagine glycosylation sites follow: Asn-650, Asn-679, Asn-694, Asn-708, Asn-729, Asn-845, and Asn-951.

Belongs to the peptidase M1 family. In terms of assembly, homodimer; disulfide-linked. Requires Zn(2+) as cofactor. Predominantly expressed in brain.

It is found in the membrane. The catalysed reaction is Release of the N-terminal pyroglutamyl group from pGlu-|-His-Xaa tripeptides and pGlu-|-His-Xaa-Gly tetrapeptides.. Functionally, specific inactivation of TRH after its release. The sequence is that of Thyrotropin-releasing hormone-degrading ectoenzyme (TRHDE) from Homo sapiens (Human).